The chain runs to 603 residues: Coagulation factor XII (603 aa).

Positions 1 to 18 (GRLLLGSLLVSLESALSA) are cleaved as a signal peptide. The region spanning 41–89 (VTGEPCYFPFQYNRQLYHHCIHKGRPGPRPWCATTPNFDQDQQWAYCLE) is the Fibronectin type-II domain. 20 disulfides stabilise this stretch: cysteine 46/cysteine 72, cysteine 60/cysteine 87, cysteine 97/cysteine 109, cysteine 103/cysteine 118, cysteine 120/cysteine 129, cysteine 134/cysteine 162, cysteine 160/cysteine 169, cysteine 177/cysteine 188, cysteine 182/cysteine 197, cysteine 199/cysteine 208, cysteine 216/cysteine 294, cysteine 237/cysteine 276, cysteine 265/cysteine 289, cysteine 345/cysteine 472, cysteine 383/cysteine 399, cysteine 391/cysteine 461, cysteine 422/cysteine 425, cysteine 488/cysteine 557, cysteine 520/cysteine 536, and cysteine 547/cysteine 578. In terms of domain architecture, EGF-like 1 spans 93-130 (VKDHCSKHNPCQRGGICVNTLSSPHCLCPDHLTGKHCQ). A Fibronectin type-I domain is found at 132 to 172 (EKCFEPQLHRFFHENEIWFRTGPAGVAKCHCKGPDAHCKQM). The region spanning 173–209 (HSQECQTNPCLNGGRCLEVEGHHLCDCPMGYTGPFCD) is the EGF-like 2 domain. Positions 216–294 (CYEGRGVSYR…SWEYCDLAQC (79 aa)) constitute a Kringle domain. 2 N-linked (GlcNAc...) asparagine glycosylation sites follow: asparagine 248 and asparagine 270. The Peptidase S1 domain occupies 359 to 602 (IVGGLVALPG…YLTWIQKHTA (244 aa)). The active-site Charge relay system is histidine 398. N-linked (GlcNAc...) asparagine glycosylation is present at asparagine 419. Residue aspartate 447 is the Charge relay system of the active site. The active-site Charge relay system is serine 551.

The protein belongs to the peptidase S1 family. As to quaternary structure, interacts with HRG; the interaction, which is enhanced in the presence of zinc ions and inhibited by heparin-binding, inhibits factor XII autoactivation and contact-initiated coagulation. Post-translationally, O- and N-glycosylated.

It is found in the secreted. The catalysed reaction is Selective cleavage of Arg-|-Ile bonds in factor VII to form factor VIIa and factor XI to form factor XIa.. With respect to regulation, activity is promoted in the presence of negatively charged surfaces. Factor XII is a serum glycoprotein that participates in the initiation of blood coagulation, fibrinolysis, and the generation of bradykinin and angiotensin. Prekallikrein is cleaved by factor XII to form kallikrein, which then cleaves factor XII first to alpha-factor XIIa and then trypsin cleaves it to beta-factor XIIa. Alpha-factor XIIa activates factor XI to factor XIa. In Cavia porcellus (Guinea pig), this protein is Coagulation factor XII (F12).